A 689-amino-acid polypeptide reads, in one-letter code: Glycine--tRNA ligase beta subunit (689 aa).

It belongs to the class-II aminoacyl-tRNA synthetase family. In terms of assembly, tetramer of two alpha and two beta subunits.

The protein resides in the cytoplasm. It catalyses the reaction tRNA(Gly) + glycine + ATP = glycyl-tRNA(Gly) + AMP + diphosphate. The chain is Glycine--tRNA ligase beta subunit from Escherichia coli O17:K52:H18 (strain UMN026 / ExPEC).